Reading from the N-terminus, the 248-residue chain is 3-deoxy-manno-octulosonate cytidylyltransferase (248 aa).

This sequence belongs to the KdsB family.

Its subcellular location is the cytoplasm. The enzyme catalyses 3-deoxy-alpha-D-manno-oct-2-ulosonate + CTP = CMP-3-deoxy-beta-D-manno-octulosonate + diphosphate. It functions in the pathway nucleotide-sugar biosynthesis; CMP-3-deoxy-D-manno-octulosonate biosynthesis; CMP-3-deoxy-D-manno-octulosonate from 3-deoxy-D-manno-octulosonate and CTP: step 1/1. Its pathway is bacterial outer membrane biogenesis; lipopolysaccharide biosynthesis. In terms of biological role, activates KDO (a required 8-carbon sugar) for incorporation into bacterial lipopolysaccharide in Gram-negative bacteria. The polypeptide is 3-deoxy-manno-octulosonate cytidylyltransferase (Shigella dysenteriae serotype 1 (strain Sd197)).